A 780-amino-acid polypeptide reads, in one-letter code: Tricorn protease-interacting factor F3 (780 aa).

Residues Glu101 and 230–234 (GAMEN) each bind substrate. His265 serves as a coordination point for Zn(2+). The Proton acceptor role is filled by Glu266. Zn(2+)-binding residues include His269 and Glu288.

The protein belongs to the peptidase M1 family. In terms of assembly, part of the tricorn proteolytic complex. Zn(2+) serves as cofactor.

It localises to the cytoplasm. Its function is as follows. Proteases F1, F2 and F3 degrade oligopeptides produced by Tricorn (themselves probably produced by the proteasome), yielding free amino acids. The chain is Tricorn protease-interacting factor F3 (trf3) from Thermoplasma acidophilum (strain ATCC 25905 / DSM 1728 / JCM 9062 / NBRC 15155 / AMRC-C165).